We begin with the raw amino-acid sequence, 193 residues long: Large ribosomal subunit protein uL18 (193 aa).

The protein belongs to the universal ribosomal protein uL18 family. In terms of assembly, part of the 50S ribosomal subunit. Contacts the 5S and 23S rRNAs.

In terms of biological role, this is one of the proteins that bind and probably mediate the attachment of the 5S RNA into the large ribosomal subunit, where it forms part of the central protuberance. The polypeptide is Large ribosomal subunit protein uL18 (Methanococcus maripaludis (strain C6 / ATCC BAA-1332)).